Here is a 60-residue protein sequence, read N- to C-terminus: Hemocyte defensin Cg-Defh2 (60 aa).

The N-terminal stretch at 1-17 (LLTLAVLLMVSADMAFA) is a signal peptide. Beta-D-GlcNAc-(1-&gt;4)-Mur2Ac(oyl-L-Ala-gamma-D-Glu-L-Lys-D-Ala-D-Ala)-di-trans,octa-cis-undecaprenyl diphosphate is bound by residues phenylalanine 19, glycine 20, and cysteine 21. 4 disulfide bridges follow: cysteine 21/cysteine 42, cysteine 28/cysteine 51, cysteine 32/cysteine 53, and cysteine 37/cysteine 56. Residues 22 to 25 (PGDQ) form a binds to membrane interface region. Histidine 31 provides a ligand contact to beta-D-GlcNAc-(1-&gt;4)-Mur2Ac(oyl-L-Ala-gamma-D-Glu-L-Lys-D-Ala-D-Ala)-di-trans,octa-cis-undecaprenyl diphosphate. A binds to membrane interface region spans residues 43 to 49 (DAVTLWL). Cysteine 51 is a binding site for beta-D-GlcNAc-(1-&gt;4)-Mur2Ac(oyl-L-Ala-gamma-D-Glu-L-Lys-D-Ala-D-Ala)-di-trans,octa-cis-undecaprenyl diphosphate.

Belongs to the invertebrate defensin family. In terms of tissue distribution, expressed in hemocytes.

The protein resides in the secreted. It localises to the target cell membrane. Antibacterial peptide mostly active against Gram-positive bacteria. It acts by selectively inhibiting peptidoglycan biosynthesis through complex formation with the cell wall precursor lipid II (1:1 molar ratio) thus inhibiting cell wall synthesis. It does not disrupt cell membranes. Is noticeably more potent than Cg-Defh1. This chain is Hemocyte defensin Cg-Defh2, found in Magallana gigas (Pacific oyster).